A 693-amino-acid chain; its full sequence is Auxin response factor 10 (693 aa).

Positions 115 to 217 form a DNA-binding region, TF-B3; it reads FAKTLTQSDA…DLCVGIRRAK (103 aa). The 89-residue stretch at 580-668 folds into the PB1 domain; that stretch reads TGHCKVFMES…DIGGDNVRKT (89 aa).

The protein belongs to the ARF family. Homodimers and heterodimers. As to expression, expressed in the whole plant.

Its subcellular location is the nucleus. Functionally, auxin response factors (ARFs) are transcriptional factors that bind specifically to the DNA sequence 5'-TGTCTC-3' found in the auxin-responsive promoter elements (AuxREs). Could act as transcriptional activator or repressor. Formation of heterodimers with Aux/IAA proteins may alter their ability to modulate early auxin response genes expression. This chain is Auxin response factor 10 (ARF10), found in Arabidopsis thaliana (Mouse-ear cress).